A 156-amino-acid chain; its full sequence is 6,7-dimethyl-8-ribityllumazine synthase (156 aa).

5-amino-6-(D-ribitylamino)uracil is bound by residues Phe23, 57–59 (AYE), and 81–83 (AII). 86-87 (GT) serves as a coordination point for (2S)-2-hydroxy-3-oxobutyl phosphate. Residue His89 is the Proton donor of the active site. Phe114 contributes to the 5-amino-6-(D-ribitylamino)uracil binding site. Arg128 serves as a coordination point for (2S)-2-hydroxy-3-oxobutyl phosphate.

It belongs to the DMRL synthase family.

The catalysed reaction is (2S)-2-hydroxy-3-oxobutyl phosphate + 5-amino-6-(D-ribitylamino)uracil = 6,7-dimethyl-8-(1-D-ribityl)lumazine + phosphate + 2 H2O + H(+). It functions in the pathway cofactor biosynthesis; riboflavin biosynthesis; riboflavin from 2-hydroxy-3-oxobutyl phosphate and 5-amino-6-(D-ribitylamino)uracil: step 1/2. Functionally, catalyzes the formation of 6,7-dimethyl-8-ribityllumazine by condensation of 5-amino-6-(D-ribitylamino)uracil with 3,4-dihydroxy-2-butanone 4-phosphate. This is the penultimate step in the biosynthesis of riboflavin. This chain is 6,7-dimethyl-8-ribityllumazine synthase, found in Helicobacter pylori (strain Shi470).